The following is a 200-amino-acid chain: Recombination protein RecR (200 aa).

A C4-type zinc finger spans residues 57-72; the sequence is CSECRTFTEEDTCAIC. The Toprim domain maps to 81-176; the sequence is GEMCIVESPA…PASRIAHGVP (96 aa).

Belongs to the RecR family.

Functionally, may play a role in DNA repair. It seems to be involved in an RecBC-independent recombinational process of DNA repair. It may act with RecF and RecO. The chain is Recombination protein RecR from Aliivibrio fischeri (strain ATCC 700601 / ES114) (Vibrio fischeri).